The following is an 84-amino-acid chain: MAHKKGGGSSKNGRDSNSQRLGVKRFGGESVLAGNILVRQRGTKFRPGNNVGLGKDHTLFALVTGKVKFEMVTKLKMQVSVYPE.

The interval 1–24 (MAHKKGGGSSKNGRDSNSQRLGVK) is disordered.

Belongs to the bacterial ribosomal protein bL27 family.

This is Large ribosomal subunit protein bL27 from Leptospira borgpetersenii serovar Hardjo-bovis (strain JB197).